The chain runs to 454 residues: Butyrophilin-like protein 2 (454 aa).

Topologically, residues 1–6 are cytoplasmic; it reads MVDCPR. A helical; Signal-anchor for type II membrane protein transmembrane segment spans residues 7 to 23; the sequence is YSLSGVAASFLFVLLTI. Residues 24-454 are Extracellular-facing; the sequence is KHPDDFRVVG…KTARFPLSGW (431 aa). 4 consecutive Ig-like V-type domains span residues 27-140, 148-234, 244-355, and 365-452; these read DDFR…VLLQ, PNIH…ATIA, ASVS…ARVD, and PRIT…FPLS. 4 disulfide bridges follow: Cys50/Cys124, Cys164/Cys218, Cys267/Cys341, and Cys381/Cys435. Residues Asn210, Asn296, Asn427, and Asn432 are each glycosylated (N-linked (GlcNAc...) asparagine).

Belongs to the immunoglobulin superfamily. BTN/MOG family. Highly expressed in intestine and at reduced levels in lung and stomach. Also expressed in thymus, spleen, lymph nodes, T-cells, B-cells, and macrophages.

The protein resides in the membrane. Negative regulator of T-cell proliferation. The sequence is that of Butyrophilin-like protein 2 from Mus musculus (Mouse).